Consider the following 241-residue polypeptide: Small ribosomal subunit protein uS3 (241 aa).

Positions Ile39 to Glu108 constitute a KH type-2 domain. A disordered region spans residues Ser215–Lys241. Residues Asn232–Lys241 show a composition bias toward low complexity.

It belongs to the universal ribosomal protein uS3 family. As to quaternary structure, part of the 30S ribosomal subunit. Forms a tight complex with proteins S10 and S14.

Its function is as follows. Binds the lower part of the 30S subunit head. Binds mRNA in the 70S ribosome, positioning it for translation. The protein is Small ribosomal subunit protein uS3 of Mesoplasma florum (Acholeplasma florum).